The following is a 341-amino-acid chain: Anthranilate phosphoribosyltransferase (341 aa).

5-phospho-alpha-D-ribose 1-diphosphate contacts are provided by residues G79, G82–D83, T87, N89–T92, K107–S115, and S119. G79 is an anthranilate binding site. S91 is a Mg(2+) binding site. N110 is a binding site for anthranilate. R165 contributes to the anthranilate binding site. D224 and E225 together coordinate Mg(2+).

This sequence belongs to the anthranilate phosphoribosyltransferase family. As to quaternary structure, homodimer. Mg(2+) is required as a cofactor.

The enzyme catalyses N-(5-phospho-beta-D-ribosyl)anthranilate + diphosphate = 5-phospho-alpha-D-ribose 1-diphosphate + anthranilate. Its pathway is amino-acid biosynthesis; L-tryptophan biosynthesis; L-tryptophan from chorismate: step 2/5. Functionally, catalyzes the transfer of the phosphoribosyl group of 5-phosphorylribose-1-pyrophosphate (PRPP) to anthranilate to yield N-(5'-phosphoribosyl)-anthranilate (PRA). This chain is Anthranilate phosphoribosyltransferase, found in Bacillus cereus (strain ZK / E33L).